The chain runs to 146 residues: UPF0260 protein Swoo_2117 (146 aa).

The protein belongs to the UPF0260 family.

The polypeptide is UPF0260 protein Swoo_2117 (Shewanella woodyi (strain ATCC 51908 / MS32)).